Consider the following 445-residue polypeptide: StAR-related lipid transfer protein 3 (445 aa).

The Cytoplasmic segment spans residues 1–51 (MSKLPGELARDLECSLPAVASLGSSLSHSQSLSSHLLPPPEKRRAISDVRR). Positions 46-217 (ISDVRRTFCL…YSPPESFAGS (172 aa)) constitute an MENTAL domain. The helical transmembrane segment at 52-72 (TFCLFVTFDLLFISLLWIIEL) threads the bilayer. At 73–94 (NTNTGIRKNLEQEIIQYNFKTS) the chain is on the extracellular side. The helical transmembrane segment at 95–115 (FFDIFVLAFFRFSGLLLGYAV) threads the bilayer. The Cytoplasmic portion of the chain corresponds to 116 to 120 (LRLQH). A helical transmembrane segment spans residues 121–141 (WWVIAVTTLVSSAFLIVKVIL). Over 142–148 (SELLSKG) the chain is Extracellular. Residues 149-169 (AFGYLLPIVSFVLAWLETWFL) form a helical membrane-spanning segment. The Cytoplasmic portion of the chain corresponds to 170 to 445 (DFKVLPQEAE…QRISELGARA (276 aa)). 2 consecutive short sequence motifs (FFAT) follow at residues 206-212 (QFYSPPE) and 207-212 (FYSPPE). A phosphoserine mark is found at Ser209, Ser217, and Ser221. The START domain maps to 248–443 (VVDQILAQEE…LRQRISELGA (196 aa)).

The protein belongs to the STARD3 family. As to quaternary structure, homodimer. Interacts (via the MENTAL domain) with STARD3NL. Interacts (via phosphorylated FFAT motif) with VAPA (via MSP domain). Interacts (via phosphorylated FFAT motif) with VAPB (via MSP domain). Interacts (via phosphorylated FFAT motif) with MOSPD2 (via MSP domain); this interaction allows enrichment of MOSPD2 around endosomes. Post-translationally, phosphorylation at Ser-209 is necessary and sufficient for the direct interaction of the phosphorylated FFAT motif with the MSP domain of MOSPD2, VAPA and VAPB and allows the tethering of two membranes that participates in the formation of ER-endosome contacts. Phosphorylation of the FFAT motif leads to conformation changes. Additional phosphorylations around the core FFAT motif (QFYSPPE) are not essential but strengthen the interaction with MOSPD2, VAPA and VAPB. Phosphorylation at Ser-209 of FFAT motif drives membrane tethering between the endoplasmic reticulum and late endosomes via interaction with VAPA and VAPB that in turn allows the efficient transport of sterol mediated by the START domain. Present in retina. Localizes to all neurons of macular retina and especially cone inner segments and axons (at protein level).

The protein resides in the late endosome membrane. It catalyses the reaction cholesterol(in) = cholesterol(out). In terms of biological role, sterol-binding protein that mediates cholesterol transport from the endoplasmic reticulum to endosomes. The sterol transport mechanism is triggered by phosphorylation of FFAT motif that leads to membrane tethering between the endoplasmic reticulum and late endosomes via interaction with VAPA and VAPB. Acts as a lipid transfer protein that redirects sterol to the endosome at the expense of the cell membrane and favors membrane formation inside endosomes. May also mediate cholesterol transport between other membranes, such as mitochondria membrane or cell membrane. However, such results need additional experimental evidences; probably mainly mediates cholesterol transport from the endoplasmic reticulum to endosomes. Does not activate transcriptional cholesterol sensing. Able to bind other lipids, such as lutein, a xanthophyll carotenoids that form the macular pigment of the retina. Able to bind other lipids, such as lutein, a xanthophyll carotenoids that form the macular pigment of the retina. In Macaca mulatta (Rhesus macaque), this protein is StAR-related lipid transfer protein 3.